We begin with the raw amino-acid sequence, 351 residues long: Inositol monophosphatase 3 (351 aa).

Residues 11-31 (LGIGVFCLLALGVLYHVYSGF) form a helical membrane-spanning segment. The Mg(2+) site is built by E121, D162, L164, D165, and D288. E121 lines the substrate pocket. Substrate-binding positions include 164–167 (LDAT) and D288.

This sequence belongs to the inositol monophosphatase superfamily. The cofactor is Mg(2+).

It is found in the membrane. The catalysed reaction is a myo-inositol phosphate + H2O = myo-inositol + phosphate. It functions in the pathway polyol metabolism; myo-inositol biosynthesis; myo-inositol from D-glucose 6-phosphate: step 2/2. The polypeptide is Inositol monophosphatase 3 (bpnt2) (Xenopus laevis (African clawed frog)).